The sequence spans 472 residues: 3-isopropylmalate dehydratase large subunit (472 aa).

Residues Cys-352, Cys-412, and Cys-415 each contribute to the [4Fe-4S] cluster site.

Belongs to the aconitase/IPM isomerase family. LeuC type 1 subfamily. Heterodimer of LeuC and LeuD. [4Fe-4S] cluster serves as cofactor.

The catalysed reaction is (2R,3S)-3-isopropylmalate = (2S)-2-isopropylmalate. Its pathway is amino-acid biosynthesis; L-leucine biosynthesis; L-leucine from 3-methyl-2-oxobutanoate: step 2/4. Functionally, catalyzes the isomerization between 2-isopropylmalate and 3-isopropylmalate, via the formation of 2-isopropylmaleate. This Roseiflexus castenholzii (strain DSM 13941 / HLO8) protein is 3-isopropylmalate dehydratase large subunit.